The sequence spans 390 residues: Chorismate synthase (390 aa).

The NADP(+) site is built by R39 and R45. FMN contacts are provided by residues 132–134 (RSS), 253–254 (NA), G298, 313–317 (KPIPT), and R339.

This sequence belongs to the chorismate synthase family. As to quaternary structure, homotetramer. The cofactor is FMNH2.

It catalyses the reaction 5-O-(1-carboxyvinyl)-3-phosphoshikimate = chorismate + phosphate. Its pathway is metabolic intermediate biosynthesis; chorismate biosynthesis; chorismate from D-erythrose 4-phosphate and phosphoenolpyruvate: step 7/7. Its function is as follows. Catalyzes the anti-1,4-elimination of the C-3 phosphate and the C-6 proR hydrogen from 5-enolpyruvylshikimate-3-phosphate (EPSP) to yield chorismate, which is the branch point compound that serves as the starting substrate for the three terminal pathways of aromatic amino acid biosynthesis. This reaction introduces a second double bond into the aromatic ring system. This chain is Chorismate synthase, found in Bacillus pumilus (strain SAFR-032).